Here is a 304-residue protein sequence, read N- to C-terminus: GTPase Era (304 aa).

Residues 9 to 177 enclose the Era-type G domain; that stretch reads HSGFVAIVGR…VTTLSQHMPE (169 aa). Positions 17–24 are G1; it reads GRPNVGKS. 17-24 provides a ligand contact to GTP; that stretch reads GRPNVGKS. Positions 43–47 are G2; the sequence is QTTRN. Residues 64–67 form a G3 region; it reads DTPG. GTP is bound by residues 64 to 68 and 127 to 130; these read DTPGI and NKID. A G4 region spans residues 127-130; that stretch reads NKID. The interval 156-158 is G5; it reads ISA. The KH type-2 domain occupies 208–285; sequence TRQEVPHSVA…YLELWVKVSE (78 aa).

This sequence belongs to the TRAFAC class TrmE-Era-EngA-EngB-Septin-like GTPase superfamily. Era GTPase family. In terms of assembly, monomer.

The protein localises to the cytoplasm. The protein resides in the cell membrane. Its function is as follows. An essential GTPase that binds both GDP and GTP, with rapid nucleotide exchange. Plays a role in 16S rRNA processing and 30S ribosomal subunit biogenesis and possibly also in cell cycle regulation and energy metabolism. The chain is GTPase Era from Pediococcus pentosaceus (strain ATCC 25745 / CCUG 21536 / LMG 10740 / 183-1w).